The following is a 66-amino-acid chain: Cocaine- and amphetamine-regulated transcript protein (66 aa).

2 disulfides stabilise this stretch: C34–C52 and C40–C60.

The protein belongs to the CART family.

It is found in the secreted. Functionally, satiety factor closely associated with the actions of leptin and neuropeptide y; this anorectic peptide inhibits both normal and starvation-induced feeding and completely blocks the feeding response induced by neuropeptide Y and regulated by leptin in the hypothalamus. In Sus scrofa (Pig), this protein is Cocaine- and amphetamine-regulated transcript protein (CARTPT).